The chain runs to 307 residues: UDP-3-O-acyl-N-acetylglucosamine deacetylase (307 aa).

Residues His79, His239, and Asp243 each coordinate Zn(2+). His266 serves as the catalytic Proton donor.

Belongs to the LpxC family. Requires Zn(2+) as cofactor.

The enzyme catalyses a UDP-3-O-[(3R)-3-hydroxyacyl]-N-acetyl-alpha-D-glucosamine + H2O = a UDP-3-O-[(3R)-3-hydroxyacyl]-alpha-D-glucosamine + acetate. It functions in the pathway glycolipid biosynthesis; lipid IV(A) biosynthesis; lipid IV(A) from (3R)-3-hydroxytetradecanoyl-[acyl-carrier-protein] and UDP-N-acetyl-alpha-D-glucosamine: step 2/6. Its function is as follows. Catalyzes the hydrolysis of UDP-3-O-myristoyl-N-acetylglucosamine to form UDP-3-O-myristoylglucosamine and acetate, the committed step in lipid A biosynthesis. The sequence is that of UDP-3-O-acyl-N-acetylglucosamine deacetylase from Tolumonas auensis (strain DSM 9187 / NBRC 110442 / TA 4).